Consider the following 419-residue polypeptide: Imidazolonepropionase (419 aa).

Fe(3+) contacts are provided by H87 and H89. Zn(2+)-binding residues include H87 and H89. 4-imidazolone-5-propanoate-binding residues include R96, Y159, and H192. An N-formimidoyl-L-glutamate-binding site is contributed by Y159. A Fe(3+)-binding site is contributed by H257. A Zn(2+)-binding site is contributed by H257. Residue Q260 coordinates 4-imidazolone-5-propanoate. D332 contacts Fe(3+). D332 is a binding site for Zn(2+). The N-formimidoyl-L-glutamate site is built by N334 and G336. S337 is a binding site for 4-imidazolone-5-propanoate.

The protein belongs to the metallo-dependent hydrolases superfamily. HutI family. The cofactor is Zn(2+). Fe(3+) serves as cofactor.

Its subcellular location is the cytoplasm. It catalyses the reaction 4-imidazolone-5-propanoate + H2O = N-formimidoyl-L-glutamate. Its pathway is amino-acid degradation; L-histidine degradation into L-glutamate; N-formimidoyl-L-glutamate from L-histidine: step 3/3. Its function is as follows. Catalyzes the hydrolytic cleavage of the carbon-nitrogen bond in imidazolone-5-propanoate to yield N-formimidoyl-L-glutamate. It is the third step in the universal histidine degradation pathway. This Alteromonas mediterranea (strain DSM 17117 / CIP 110805 / LMG 28347 / Deep ecotype) protein is Imidazolonepropionase.